A 130-amino-acid chain; its full sequence is Small ribosomal subunit protein uS9 (130 aa).

This sequence belongs to the universal ribosomal protein uS9 family.

The polypeptide is Small ribosomal subunit protein uS9 (Burkholderia vietnamiensis (strain G4 / LMG 22486) (Burkholderia cepacia (strain R1808))).